A 215-amino-acid polypeptide reads, in one-letter code: Uracil phosphoribosyltransferase (215 aa).

30-34 (KGMVR) provides a ligand contact to GTP. 5-phospho-alpha-D-ribose 1-diphosphate is bound by residues R80, R105, and 139 to 147 (DPMIATAST). Uracil is bound by residues I202 and 207–209 (GDA). Residue D208 coordinates 5-phospho-alpha-D-ribose 1-diphosphate.

This sequence belongs to the UPRTase family. Requires Mg(2+) as cofactor.

The enzyme catalyses UMP + diphosphate = 5-phospho-alpha-D-ribose 1-diphosphate + uracil. The protein operates within pyrimidine metabolism; UMP biosynthesis via salvage pathway; UMP from uracil: step 1/1. Allosterically activated by GTP. Catalyzes the conversion of uracil and 5-phospho-alpha-D-ribose 1-diphosphate (PRPP) to UMP and diphosphate. The sequence is that of Uracil phosphoribosyltransferase from Metallosphaera sedula (strain ATCC 51363 / DSM 5348 / JCM 9185 / NBRC 15509 / TH2).